The sequence spans 212 residues: Sentrin-specific protease 8 (212 aa).

An N-acetylmethionine modification is found at M1. A protease region spans residues S11–L174. Residues H102 and D119 contribute to the active site. The Nucleophile role is filled by C163.

Belongs to the peptidase C48 family. Broadly expressed, with highest levels in kidney and pancreas.

In terms of biological role, protease that catalyzes two essential functions in the NEDD8 pathway: processing of full-length NEDD8 to its mature form and deconjugation of NEDD8 from targeted proteins such as cullins or p53. The chain is Sentrin-specific protease 8 (SENP8) from Homo sapiens (Human).